Here is a 546-residue protein sequence, read N- to C-terminus: Methionine--tRNA ligase (546 aa).

The short motif at 15–25 (PYANGPIHLGH) is the 'HIGH' region element. Residues cysteine 146, cysteine 149, cysteine 159, and cysteine 162 each contribute to the Zn(2+) site. The short motif at 332 to 336 (KMSKS) is the 'KMSKS' region element. Lysine 335 serves as a coordination point for ATP.

It belongs to the class-I aminoacyl-tRNA synthetase family. MetG type 1 subfamily. In terms of assembly, monomer. Requires Zn(2+) as cofactor.

It is found in the cytoplasm. The enzyme catalyses tRNA(Met) + L-methionine + ATP = L-methionyl-tRNA(Met) + AMP + diphosphate. Its function is as follows. Is required not only for elongation of protein synthesis but also for the initiation of all mRNA translation through initiator tRNA(fMet) aminoacylation. The sequence is that of Methionine--tRNA ligase from Coxiella burnetii (strain Dugway 5J108-111).